Reading from the N-terminus, the 85-residue chain is Large ribosomal subunit protein bL27 (85 aa).

The segment at Met-1–Met-20 is disordered.

It belongs to the bacterial ribosomal protein bL27 family.

The protein is Large ribosomal subunit protein bL27 of Psychrobacter arcticus (strain DSM 17307 / VKM B-2377 / 273-4).